Reading from the N-terminus, the 441-residue chain is L-seryl-tRNA(Sec) selenium transferase (441 aa).

Residue lysine 283 is modified to N6-(pyridoxal phosphate)lysine.

The protein belongs to the SelA family. Pyridoxal 5'-phosphate serves as cofactor.

Its subcellular location is the cytoplasm. The catalysed reaction is L-seryl-tRNA(Sec) + selenophosphate + H(+) = L-selenocysteinyl-tRNA(Sec) + phosphate. It participates in aminoacyl-tRNA biosynthesis; selenocysteinyl-tRNA(Sec) biosynthesis; selenocysteinyl-tRNA(Sec) from L-seryl-tRNA(Sec) (bacterial route): step 1/1. In terms of biological role, converts seryl-tRNA(Sec) to selenocysteinyl-tRNA(Sec) required for selenoprotein biosynthesis. This chain is L-seryl-tRNA(Sec) selenium transferase, found in Campylobacter concisus (strain 13826).